The following is a 147-amino-acid chain: Large ribosomal subunit protein uL15 (147 aa).

Residues 1–13 (MELHSLKAAEGSR) are compositionally biased toward basic and acidic residues. Residues 1–57 (MELHSLKAAEGSRKVRNRVGRGTSSGNGKTSGRGQKGQKSRSGGGVRPGFEGGQTEL) are disordered. 2 stretches are compositionally biased toward gly residues: residues 23-35 (TSSG…GRGQ) and 42-52 (SGGGVRPGFEG).

The protein belongs to the universal ribosomal protein uL15 family. In terms of assembly, part of the 50S ribosomal subunit.

In terms of biological role, binds to the 23S rRNA. In Lactococcus lactis subsp. lactis (strain IL1403) (Streptococcus lactis), this protein is Large ribosomal subunit protein uL15.